The following is a 555-amino-acid chain: Formate--tetrahydrofolate ligase (555 aa).

63-70 (TPAGEGKT) contacts ATP.

The protein belongs to the formate--tetrahydrofolate ligase family.

The enzyme catalyses (6S)-5,6,7,8-tetrahydrofolate + formate + ATP = (6R)-10-formyltetrahydrofolate + ADP + phosphate. The protein operates within one-carbon metabolism; tetrahydrofolate interconversion. This Beijerinckia indica subsp. indica (strain ATCC 9039 / DSM 1715 / NCIMB 8712) protein is Formate--tetrahydrofolate ligase.